The primary structure comprises 348 residues: S-adenosylmethionine:tRNA ribosyltransferase-isomerase (348 aa).

It belongs to the QueA family. As to quaternary structure, monomer.

It localises to the cytoplasm. It catalyses the reaction 7-aminomethyl-7-carbaguanosine(34) in tRNA + S-adenosyl-L-methionine = epoxyqueuosine(34) in tRNA + adenine + L-methionine + 2 H(+). The protein operates within tRNA modification; tRNA-queuosine biosynthesis. Functionally, transfers and isomerizes the ribose moiety from AdoMet to the 7-aminomethyl group of 7-deazaguanine (preQ1-tRNA) to give epoxyqueuosine (oQ-tRNA). This Polynucleobacter necessarius subsp. necessarius (strain STIR1) protein is S-adenosylmethionine:tRNA ribosyltransferase-isomerase.